The sequence spans 955 residues: Disintegrin and metalloproteinase domain-containing protein 19 (955 aa).

The signal sequence occupies residues 1–25 (MPGGAGAARLCLLAFALQPLRPRAA). Residues 26-202 (REPGWTRGSE…QTKKRPRRMK (177 aa)) constitute a propeptide that is removed on maturation. Positions 130–137 (STCRGIRG) match the Cysteine switch motif. Position 132 (Cys132) interacts with Zn(2+). Residue Asn144 is glycosylated (N-linked (GlcNAc...) asparagine). Topologically, residues 203 to 699 (REDLNSMKYV…IDSGPMPPES (497 aa)) are extracellular. The 199-residue stretch at 210-408 (KYVELYLVAD…GGGMCLSNMP (199 aa)) folds into the Peptidase M12B domain. 3 disulfides stabilise this stretch: Cys320–Cys403, Cys360–Cys387, and Cys361–Cys370. Residue His345 coordinates Zn(2+). The active site involves Glu346. Zn(2+) is bound by residues His349 and His355. In terms of domain architecture, Disintegrin spans 416 to 502 (GRRCGNGYLE…HCPTNFYQMD (87 aa)). N-linked (GlcNAc...) asparagine glycans are attached at residues Asn444 and Asn447. A disulfide bridge links Cys474 with Cys494. An N-linked (GlcNAc...) asparagine glycan is attached at Asn645. One can recognise an EGF-like domain in the interval 650–682 (ETEGCGKKCNGHGVCNNNQNCHCLPGWAPPFCN). 3 disulfide bridges follow: Cys654–Cys664, Cys658–Cys670, and Cys672–Cys681. A helical membrane pass occupies residues 700-720 (VGPVVAGVLVAILVLAVLMLM). Residues 721–955 (YYCCRQNNKL…AKHSCFLVPA (235 aa)) lie on the Cytoplasmic side of the membrane. Residues 753–771 (SQNSGTGHANPTFKLQTPQ) are compositionally biased toward polar residues. Residues 753-917 (SQNSGTGHAN…LKVKAGTRGL (165 aa)) form a disordered region. Composition is skewed to pro residues over residues 787 to 796 (SQPPPRPPPD) and 833 to 844 (RPPPSRPIPPAP). Residues 833 to 844 (RPPPSRPIPPAP) carry the SH3-binding motif.

Interacts with SH3PXD2A. Requires Zn(2+) as cofactor. In terms of processing, the precursor is cleaved by a furin endopeptidase. As to expression, expressed in many normal organ tissues and several cancer cell lines.

It is found in the membrane. Functionally, participates in the proteolytic processing of beta-type neuregulin isoforms which are involved in neurogenesis and synaptogenesis, suggesting a regulatory role in glial cell. Also cleaves alpha-2 macroglobulin. May be involved in osteoblast differentiation and/or osteoblast activity in bone. In Homo sapiens (Human), this protein is Disintegrin and metalloproteinase domain-containing protein 19 (ADAM19).